Reading from the N-terminus, the 402-residue chain is GTPase HflX (402 aa).

A Hflx-type G domain is found at 181 to 350 (DTVGLIGYTN…MIIEHLNLSI (170 aa)). GTP-binding positions include 187–194 (GYTNAGKT), 212–216 (FTTLT), 233–236 (DTVG), 300–303 (NKVD), and 328–330 (SAK). Positions 194 and 214 each coordinate Mg(2+).

It belongs to the TRAFAC class OBG-HflX-like GTPase superfamily. HflX GTPase family. As to quaternary structure, monomer. Associates with the 50S ribosomal subunit. Mg(2+) serves as cofactor.

The protein localises to the cytoplasm. In terms of biological role, GTPase that associates with the 50S ribosomal subunit and may have a role during protein synthesis or ribosome biogenesis. The sequence is that of GTPase HflX from Methanocaldococcus jannaschii (strain ATCC 43067 / DSM 2661 / JAL-1 / JCM 10045 / NBRC 100440) (Methanococcus jannaschii).